Here is a 194-residue protein sequence, read N- to C-terminus: Peptidyl-tRNA hydrolase (194 aa).

Tyr17 provides a ligand contact to tRNA. The active-site Proton acceptor is the His22. Residues Tyr68, Asn70, and Asn116 each contribute to the tRNA site.

This sequence belongs to the PTH family. Monomer.

Its subcellular location is the cytoplasm. It carries out the reaction an N-acyl-L-alpha-aminoacyl-tRNA + H2O = an N-acyl-L-amino acid + a tRNA + H(+). Its function is as follows. Hydrolyzes ribosome-free peptidyl-tRNAs (with 1 or more amino acids incorporated), which drop off the ribosome during protein synthesis, or as a result of ribosome stalling. Functionally, catalyzes the release of premature peptidyl moieties from peptidyl-tRNA molecules trapped in stalled 50S ribosomal subunits, and thus maintains levels of free tRNAs and 50S ribosomes. In Marinomonas sp. (strain MWYL1), this protein is Peptidyl-tRNA hydrolase.